A 139-amino-acid polypeptide reads, in one-letter code: Large ribosomal subunit protein uL16 (139 aa).

The disordered stretch occupies residues 1–23 (MLQPARTKYRKMHKGRMPGSAHR). Residues 7 to 16 (TKYRKMHKGR) are compositionally biased toward basic residues.

It belongs to the universal ribosomal protein uL16 family. As to quaternary structure, part of the 50S ribosomal subunit.

Its function is as follows. Binds 23S rRNA and is also seen to make contacts with the A and possibly P site tRNAs. In Myxococcus xanthus (strain DK1622), this protein is Large ribosomal subunit protein uL16.